The following is a 904-amino-acid chain: Protein translocase subunit SecA (904 aa).

ATP is bound by residues Gln-89, Gly-107–Thr-111, and Asp-496. The segment at Gly-870–Arg-904 is disordered. Low complexity predominate over residues Ser-876–Ser-889.

It belongs to the SecA family. As to quaternary structure, monomer and homodimer. Part of the essential Sec protein translocation apparatus which comprises SecA, SecYEG and auxiliary proteins SecDF. Other proteins may also be involved.

It is found in the cell inner membrane. The protein resides in the cytoplasm. The enzyme catalyses ATP + H2O + cellular proteinSide 1 = ADP + phosphate + cellular proteinSide 2.. Part of the Sec protein translocase complex. Interacts with the SecYEG preprotein conducting channel. Has a central role in coupling the hydrolysis of ATP to the transfer of proteins into and across the cell membrane, serving as an ATP-driven molecular motor driving the stepwise translocation of polypeptide chains across the membrane. The sequence is that of Protein translocase subunit SecA from Leptospira borgpetersenii serovar Hardjo-bovis (strain JB197).